Consider the following 304-residue polypeptide: Probable HTH-type transcriptional regulator LgoR (304 aa).

An HTH gntR-type domain is found at 1 to 70; it reads MSRSQNLRHN…VGNDYVIARK (70 aa). Positions 31–50 form a DNA-binding region, H-T-H motif; sequence QSALAEMYNISRTTVRHILS.

Its function is as follows. May be a positive transcriptional regulator for lgoD and/or lgoT. Is essential for growth on L-galactonate as the sole carbon source. This Escherichia coli (strain K12) protein is Probable HTH-type transcriptional regulator LgoR (lgoR).